We begin with the raw amino-acid sequence, 196 residues long: MQERIKACFTESIQTQIAAAEALPDAISRAAMTLVQSLLNGNKILCCGNGTSAANAQHFAASMINRFETERPSLPAIALNTDNVVLTAIANDRLHDEVYAKQVRALGHAGDVLLAISARGNSRDIVKAVEAAVTRDMTIVALTGYDGGELAGLLGPQDVEIRIPSHRSARIQEMHMLTVNCLCDLIDNTLFPHQDD.

The region spanning 34-196 is the SIS domain; that stretch reads LVQSLLNGNK…DNTLFPHQDD (163 aa).

It belongs to the SIS family. DiaA subfamily. As to quaternary structure, homotetramer; dimer of dimers.

In terms of biological role, required for the timely initiation of chromosomal replication via direct interactions with the DnaA initiator protein. In Shigella flexneri serotype 5b (strain 8401), this protein is DnaA initiator-associating protein DiaA.